A 635-amino-acid polypeptide reads, in one-letter code: ATP-dependent zinc metalloprotease FtsH (635 aa).

At 1–4 the chain is on the cytoplasmic side; that stretch reads MVKN. Residues 5–25 traverse the membrane as a helical segment; sequence LVLWVVVAVIMMTAYQSFNSS. The Periplasmic segment spans residues 26–97; the sequence is SVENSTDYTT…VEGTPFERRG (72 aa). The helical transmembrane segment at 98 to 118 threads the bilayer; the sequence is FLSQILISWFPMLFLVGVWVF. Topologically, residues 119 to 635 are cytoplasmic; sequence FMRQMQGGGG…AVENTDDFNV (517 aa). ATP is bound at residue 191–198; it reads GPPGTGKT. Histidine 413 is a Zn(2+) binding site. Glutamate 414 is a catalytic residue. Positions 417 and 491 each coordinate Zn(2+). Residues 593 to 635 form a disordered region; that stretch reads NREPVTPPSGWGEPKTQQAAYANSTTNDTKPESAVENTDDFNV. Polar residues predominate over residues 607–620; that stretch reads KTQQAAYANSTTND.

The protein in the central section; belongs to the AAA ATPase family. This sequence in the C-terminal section; belongs to the peptidase M41 family. In terms of assembly, homohexamer. The cofactor is Zn(2+).

The protein localises to the cell inner membrane. Acts as a processive, ATP-dependent zinc metallopeptidase for both cytoplasmic and membrane proteins. Plays a role in the quality control of integral membrane proteins. This is ATP-dependent zinc metalloprotease FtsH from Haemophilus influenzae (strain ATCC 51907 / DSM 11121 / KW20 / Rd).